A 382-amino-acid chain; its full sequence is SOX domain-containing protein dichaete (382 aa).

2 disordered regions span residues 53-142 and 346-382; these read GGSP…EGHI and YPSSSTSSPGSSPGTITPNGMDGSMDSALRRPVPVLY. The segment covering 60–69 has biased composition (gly residues); it reads AGQGVNGSSG. The span at 96 to 123 shows a compositional bias: low complexity; that stretch reads NSSIGSAGSLGSQSSLGSNGSGLNSSSG. The HMG box DNA-binding region spans 142 to 210; the sequence is IKRPMNAFMV…LHMKEHPDYK (69 aa). Low complexity predominate over residues 347–360; that stretch reads PSSSTSSPGSSPGT.

In terms of tissue distribution, initially expressed in a pair-rule-like pattern which is rapidly replaced by strong neuroectoderm expression.

Its subcellular location is the nucleus. Essential for segmentation and CNS development. May modulate the actions of other transcription factors, including gap and pair-rule proteins. This chain is SOX domain-containing protein dichaete (D), found in Drosophila melanogaster (Fruit fly).